The primary structure comprises 235 residues: Large ribosomal subunit protein uL1 (235 aa).

This sequence belongs to the universal ribosomal protein uL1 family. As to quaternary structure, part of the 50S ribosomal subunit.

Functionally, binds directly to 23S rRNA. The L1 stalk is quite mobile in the ribosome, and is involved in E site tRNA release. Protein L1 is also a translational repressor protein, it controls the translation of the L11 operon by binding to its mRNA. This chain is Large ribosomal subunit protein uL1, found in Mycolicibacterium smegmatis (strain ATCC 700084 / mc(2)155) (Mycobacterium smegmatis).